Here is a 224-residue protein sequence, read N- to C-terminus: MLDSPKLTARQQQILDLIQTAIARTGAPPTRAEIAAEFGFKSANAAEEHLQALARKGVIELVSGTSRGIRLRGEAVRSINAARGTQFHLPIPGISQLMLPLIGRVAAGSPILAEEHVDQTYSVEGSLFQHKPDYLLKVRGMSMRDAGIMDGDLLAVQSTREARNGQIIVARLGDEVTVKRLRRTAGAIELLPENPDYPIITVQPGESFEIEGLAVGLIRNTMLM.

The segment at residues 31–51 is a DNA-binding region (H-T-H motif); sequence RAEIAAEFGFKSANAAEEHLQ. Active-site for autocatalytic cleavage activity residues include Ser-142 and Lys-179.

This sequence belongs to the peptidase S24 family. Homodimer.

The catalysed reaction is Hydrolysis of Ala-|-Gly bond in repressor LexA.. Functionally, represses a number of genes involved in the response to DNA damage (SOS response), including recA and lexA. In the presence of single-stranded DNA, RecA interacts with LexA causing an autocatalytic cleavage which disrupts the DNA-binding part of LexA, leading to derepression of the SOS regulon and eventually DNA repair. The chain is LexA repressor from Paracidovorax citrulli (strain AAC00-1) (Acidovorax citrulli).